We begin with the raw amino-acid sequence, 263 residues long: Hydroxyethylthiazole kinase 2 (263 aa).

Methionine 42 is a binding site for substrate. Residues lysine 118 and threonine 164 each coordinate ATP. Glycine 191 serves as a coordination point for substrate.

This sequence belongs to the Thz kinase family. The cofactor is Mg(2+).

It carries out the reaction 5-(2-hydroxyethyl)-4-methylthiazole + ATP = 4-methyl-5-(2-phosphooxyethyl)-thiazole + ADP + H(+). It participates in cofactor biosynthesis; thiamine diphosphate biosynthesis; 4-methyl-5-(2-phosphoethyl)-thiazole from 5-(2-hydroxyethyl)-4-methylthiazole: step 1/1. In terms of biological role, catalyzes the phosphorylation of the hydroxyl group of 4-methyl-5-beta-hydroxyethylthiazole (THZ). The chain is Hydroxyethylthiazole kinase 2 from Clostridium botulinum (strain Loch Maree / Type A3).